Here is a 978-residue protein sequence, read N- to C-terminus: Chaperone protein ClpB2, chloroplastic (978 aa).

Residues 1 to 76 (MAAAPPLAAG…RMPPRTLSVR (76 aa)) constitute a chloroplast transit peptide. One can recognise a Clp R domain in the interval 85–229 (TQQEFTEMAW…KTAIESIRGK (145 aa)). Repeat regions lie at residues 89-154 (FTEM…IQRQ) and 166-229 (LGRD…IRGK). Residues 244–492 (LDKYGKDLTA…KLKMEITSKP (249 aa)) form an i region. ATP contacts are provided by residues 289–296 (GEPGVGKT) and 692–699 (GPTGVGKT). Positions 618-809 (VTQDDIAEIV…IIIMTSNVGS (192 aa)) are II.

Belongs to the ClpA/ClpB family.

It localises to the plastid. The protein localises to the chloroplast. Functionally, molecular chaperone that may play a role in chloroplast development. The protein is Chaperone protein ClpB2, chloroplastic (CLPB2) of Oryza sativa subsp. japonica (Rice).